The following is a 213-amino-acid chain: Thymidylate kinase (213 aa).

9-16 (GLEGAGKS) contacts ATP.

It belongs to the thymidylate kinase family.

The catalysed reaction is dTMP + ATP = dTDP + ADP. In terms of biological role, phosphorylation of dTMP to form dTDP in both de novo and salvage pathways of dTTP synthesis. The chain is Thymidylate kinase from Aeromonas hydrophila subsp. hydrophila (strain ATCC 7966 / DSM 30187 / BCRC 13018 / CCUG 14551 / JCM 1027 / KCTC 2358 / NCIMB 9240 / NCTC 8049).